We begin with the raw amino-acid sequence, 728 residues long: MSSRIDRDVINALIAGHFADPFSVLGMHQTQAGLEVRALLPDATDVWVIEPKTGRKVGKLECLDARGFFCGVLPRRKNFFRYQLAVTWHGQQNLIDDPYRFGPLMQEMDAWLLSEGTHLRPYETLGAHADTMDGVTGTRFSVWAPNARRVSVVGQFNYWDGRRHPMRLRKESGIWELFIPGAHNGQLYKFELLDANGNLRIKADPYAFEAQMRPETASMICGLPEKVTPSEERQKANQFDAPISIYEVHLGSWRRHTDNNFWLSYRELADQLVPYAKWMGFTHLELLPVNEHPFDGSWGYQPTGLYAPTRRFGTLDDFRYFINAAHAAGLNVILDWVPGHFPSDEFSLAEFDGTHLYEHSDPREGYHQDWNTLIYNYGRREVSNYLVGNALYWMERFGIDALRVDAVASMIYRDYSRKEGEWIPNEFGGRENLEAIEFLRNTNRIIGEQVPGAVSMAEESTDFSGVTRPPETGGLGFWYKWNLGWMHDTLDYMKLDPVYRQYHHDKLTFGMLYNHTENFVLPLSHDEVVHGKKSILDRMPGDAWQKFANLRAYYGWMWAFPGKKLLFMGNEFAQGREWNHDASLDWHLLEGGDNWHHGVQRLVRDLNHTYRHHKALHELDFDAYGFEWLVVDDNERSVLIFVRRDKAGNEIIVASNFTPVPRHDYRFGINQPGRWREILNTDSMHYHGSNTGNGGVVHSDEIESHGRQHSLNLTLPPLATIWLMREGE.

Aspartate 405 serves as the catalytic Nucleophile. Glutamate 458 (proton donor) is an active-site residue.

The protein belongs to the glycosyl hydrolase 13 family. GlgB subfamily. In terms of assembly, monomer.

It catalyses the reaction Transfers a segment of a (1-&gt;4)-alpha-D-glucan chain to a primary hydroxy group in a similar glucan chain.. Its pathway is glycan biosynthesis; glycogen biosynthesis. Catalyzes the formation of the alpha-1,6-glucosidic linkages in glycogen by scission of a 1,4-alpha-linked oligosaccharide from growing alpha-1,4-glucan chains and the subsequent attachment of the oligosaccharide to the alpha-1,6 position. The protein is 1,4-alpha-glucan branching enzyme GlgB of Salmonella paratyphi A (strain ATCC 9150 / SARB42).